The sequence spans 82 residues: Small ribosomal subunit protein bS16 (82 aa).

This sequence belongs to the bacterial ribosomal protein bS16 family.

The polypeptide is Small ribosomal subunit protein bS16 (Crocosphaera subtropica (strain ATCC 51142 / BH68) (Cyanothece sp. (strain ATCC 51142))).